Here is a 151-residue protein sequence, read N- to C-terminus: D-aminoacyl-tRNA deacylase (151 aa).

The Gly-cisPro motif, important for rejection of L-amino acids signature appears at 137–138 (GP).

The protein belongs to the DTD family. Homodimer.

Its subcellular location is the cytoplasm. The catalysed reaction is glycyl-tRNA(Ala) + H2O = tRNA(Ala) + glycine + H(+). The enzyme catalyses a D-aminoacyl-tRNA + H2O = a tRNA + a D-alpha-amino acid + H(+). In terms of biological role, an aminoacyl-tRNA editing enzyme that deacylates mischarged D-aminoacyl-tRNAs. Also deacylates mischarged glycyl-tRNA(Ala), protecting cells against glycine mischarging by AlaRS. Acts via tRNA-based rather than protein-based catalysis; rejects L-amino acids rather than detecting D-amino acids in the active site. By recycling D-aminoacyl-tRNA to D-amino acids and free tRNA molecules, this enzyme counteracts the toxicity associated with the formation of D-aminoacyl-tRNA entities in vivo and helps enforce protein L-homochirality. The polypeptide is D-aminoacyl-tRNA deacylase (Listeria monocytogenes serotype 4a (strain HCC23)).